The primary structure comprises 147 residues: Cyclic di-AMP receptor B (147 aa).

Residues 18 to 78 (MIEADKVAHV…SIFGLERIEF (61 aa)) form the CBS domain. 3',3'-c-di-AMP is bound by residues Lys-23, Ala-25, Thr-46, Ala-47, and Arg-131.

Homodimer. Forms a homodimer with a parallel, head-to-head assembly of the monomers. Under conditions of potassium starvation and corresponding low c-di-AMP levels, apo-DarB specifically interacts with the N-terminal region of the RelA. Under the same conditions, apo-DarB also specifically interacts with the C-terminal part of the pyruvate carboxylase.

Binds c-di-AMP. Binding of c-di-AMP to DarB inhibits the interaction with RelA and PYC. In terms of biological role, involved in the c-di-AMP-dependent regulation of the bacterial stringent response. Modulates the activities of at least two enzymes under conditions of potassium limitation. Apo-DarB regulates the activity of the GTP pyrophosphokinase RelA by interacting directly with RelA, leading to stimulation of (p)ppGpp synthesis and induction of the stringent response. Apo-DarB also regulates pyruvate carboxylase (PYC) at two levels: directly at the protein level by binding to the enzyme and stimulating the synthesis of oxaloacetate and indirectly, by interaction with RelA, which leads to activation of the stringent response and to the increased expression of the pycA gene. Stimulation of these enzymes by DarB is prevented in the presence of cyclic di-AMP (c-di-AMP). The sequence is that of Cyclic di-AMP receptor B from Bacillus subtilis (strain 168).